We begin with the raw amino-acid sequence, 154 residues long: Myoglobin (154 aa).

The region spanning 2–148 (GLSDGEWQSV…FRNDIAAKYK (147 aa)) is the Globin domain. Phosphoserine is present on serine 4. Histidine 65 lines the nitrite pocket. Histidine 65 provides a ligand contact to O2. Threonine 68 carries the phosphothreonine modification. Histidine 94 contacts heme b.

Belongs to the globin family. In terms of assembly, monomeric.

It is found in the cytoplasm. The protein resides in the sarcoplasm. The catalysed reaction is Fe(III)-heme b-[protein] + nitric oxide + H2O = Fe(II)-heme b-[protein] + nitrite + 2 H(+). The enzyme catalyses H2O2 + AH2 = A + 2 H2O. Functionally, monomeric heme protein which primary function is to store oxygen and facilitate its diffusion within muscle tissues. Reversibly binds oxygen through a pentacoordinated heme iron and enables its timely and efficient release as needed during periods of heightened demand. Depending on the oxidative conditions of tissues and cells, and in addition to its ability to bind oxygen, it also has a nitrite reductase activity whereby it regulates the production of bioactive nitric oxide. Under stress conditions, like hypoxia and anoxia, it also protects cells against reactive oxygen species thanks to its pseudoperoxidase activity. The sequence is that of Myoglobin (MB) from Perodicticus potto edwarsi (Potto).